Consider the following 118-residue polypeptide: Large ribosomal subunit protein uL18 (118 aa).

It belongs to the universal ribosomal protein uL18 family. Part of the 50S ribosomal subunit; part of the 5S rRNA/L5/L18/L25 subcomplex. Contacts the 5S and 23S rRNAs.

Functionally, this is one of the proteins that bind and probably mediate the attachment of the 5S RNA into the large ribosomal subunit, where it forms part of the central protuberance. The chain is Large ribosomal subunit protein uL18 from Mycoplasmopsis pulmonis (strain UAB CTIP) (Mycoplasma pulmonis).